The following is a 265-amino-acid chain: uncharacterized protein (265 aa).

Glu47 contacts thiamine diphosphate. A thiamine pyrophosphate binding region spans residues 204–247 (QHQMWLVQHILRVARHCGFTVTTMEMTLIETQVRLKITVKSDRT).

The protein belongs to the TPP enzyme family. The cofactor is Mg(2+). Requires thiamine diphosphate as cofactor.

In terms of biological role, truncated acetolactase synthase; no longer catalytically active. This is an uncharacterized protein from Haemophilus influenzae (strain ATCC 51907 / DSM 11121 / KW20 / Rd).